Reading from the N-terminus, the 386-residue chain is Galactokinase (386 aa).

35 to 38 (EHTD) serves as a coordination point for substrate. ATP contacts are provided by residues Ser69 and 125–131 (GAGLSSS). Positions 131 and 163 each coordinate Mg(2+). The Proton acceptor role is filled by Asp175. Tyr224 lines the substrate pocket.

The protein belongs to the GHMP kinase family. GalK subfamily.

It localises to the cytoplasm. The catalysed reaction is alpha-D-galactose + ATP = alpha-D-galactose 1-phosphate + ADP + H(+). The protein operates within carbohydrate metabolism; galactose metabolism. Functionally, catalyzes the transfer of the gamma-phosphate of ATP to D-galactose to form alpha-D-galactose-1-phosphate (Gal-1-P). The protein is Galactokinase of Vibrio vulnificus (strain YJ016).